A 370-amino-acid chain; its full sequence is UDP-N-acetylglucosamine--N-acetylmuramyl-(pentapeptide) pyrophosphoryl-undecaprenol N-acetylglucosamine transferase (370 aa).

Residues 10–12, Asn-126, Ser-200, Ile-255, and Gln-300 contribute to the UDP-N-acetyl-alpha-D-glucosamine site; that span reads TGG.

The protein belongs to the glycosyltransferase 28 family. MurG subfamily.

It localises to the cell membrane. The enzyme catalyses Mur2Ac(oyl-L-Ala-gamma-D-Glu-L-Lys-D-Ala-D-Ala)-di-trans,octa-cis-undecaprenyl diphosphate + UDP-N-acetyl-alpha-D-glucosamine = beta-D-GlcNAc-(1-&gt;4)-Mur2Ac(oyl-L-Ala-gamma-D-Glu-L-Lys-D-Ala-D-Ala)-di-trans,octa-cis-undecaprenyl diphosphate + UDP + H(+). It participates in cell wall biogenesis; peptidoglycan biosynthesis. In terms of biological role, cell wall formation. Catalyzes the transfer of a GlcNAc subunit on undecaprenyl-pyrophosphoryl-MurNAc-pentapeptide (lipid intermediate I) to form undecaprenyl-pyrophosphoryl-MurNAc-(pentapeptide)GlcNAc (lipid intermediate II). The polypeptide is UDP-N-acetylglucosamine--N-acetylmuramyl-(pentapeptide) pyrophosphoryl-undecaprenol N-acetylglucosamine transferase (Lactobacillus johnsonii (strain CNCM I-12250 / La1 / NCC 533)).